The sequence spans 130 residues: uncharacterized protein (130 aa).

The first 18 residues, 1-18 (MVEVWWSLIGAAVPALIA), serve as a signal peptide directing secretion.

This is an uncharacterized protein from Arabidopsis thaliana (Mouse-ear cress).